A 123-amino-acid chain; its full sequence is Small ribosomal subunit protein uS12 (123 aa).

Position 89 is a 3-methylthioaspartic acid (Asp-89).

Belongs to the universal ribosomal protein uS12 family. As to quaternary structure, part of the 30S ribosomal subunit. Contacts proteins S8 and S17. May interact with IF1 in the 30S initiation complex.

Functionally, with S4 and S5 plays an important role in translational accuracy. Its function is as follows. Interacts with and stabilizes bases of the 16S rRNA that are involved in tRNA selection in the A site and with the mRNA backbone. Located at the interface of the 30S and 50S subunits, it traverses the body of the 30S subunit contacting proteins on the other side and probably holding the rRNA structure together. The combined cluster of proteins S8, S12 and S17 appears to hold together the shoulder and platform of the 30S subunit. The sequence is that of Small ribosomal subunit protein uS12 from Geotalea uraniireducens (strain Rf4) (Geobacter uraniireducens).